The primary structure comprises 434 residues: Ribonuclease T2-like (434 aa).

A signal peptide spans Met1–Gly18. 5 disulfide bridges follow: Cys27–Cys46, Cys35–Cys94, Cys45–Cys171, Cys102–Cys163, and Cys241–Cys277. Residues Asn37 and Asn70 are each glycosylated (N-linked (GlcNAc...) asparagine). His87 is a catalytic residue. Residues Asn103 and Asn123 are each glycosylated (N-linked (GlcNAc...) asparagine). Active-site residues include Glu156 and His160.

It belongs to the RNase T2 family. Post-translationally, N-glycosylated.

The protein resides in the vacuole lumen. It is found in the cytoplasm. It carries out the reaction a ribonucleotidyl-ribonucleotide-RNA + H2O = a 3'-end 3'-phospho-ribonucleotide-RNA + a 5'-end dephospho-ribonucleoside-RNA + H(+). Functionally, rnase which modulates cell survival under stress conditions. Released from the vacuole to the cytoplasm during stress to promote tRNA and rRNA cleavage and to activate separately a downstream pathway that promotes cell death. Involved in cell size, vacuolar morphology and growth at high temperatures and high salt concentration. This is Ribonuclease T2-like (RNY1) from Saccharomyces cerevisiae (strain ATCC 204508 / S288c) (Baker's yeast).